We begin with the raw amino-acid sequence, 66 residues long: ATP synthase F(0) complex subunit 8 (66 aa).

At methionine 1 the chain carries N-formylmethionine. A helical membrane pass occupies residues 8–24 (TWLTMILSMFLTLFIIF). Lysine 54 carries the post-translational modification N6-acetyllysine; alternate. Residue lysine 54 is modified to N6-succinyllysine; alternate. Lysine 57 is subject to N6-acetyllysine.

The protein belongs to the ATPase protein 8 family. In terms of assembly, component of the ATP synthase complex composed at least of ATP5F1A/subunit alpha, ATP5F1B/subunit beta, ATP5MC1/subunit c (homooctomer), MT-ATP6/subunit a, MT-ATP8/subunit 8, ATP5ME/subunit e, ATP5MF/subunit f, ATP5MG/subunit g, ATP5MK/subunit k, ATP5MJ/subunit j, ATP5F1C/subunit gamma, ATP5F1D/subunit delta, ATP5F1E/subunit epsilon, ATP5PF/subunit F6, ATP5PB/subunit b, ATP5PD/subunit d, ATP5PO/subunit OSCP. ATP synthase complex consists of a soluble F(1) head domain (subunits alpha(3) and beta(3)) - the catalytic core - and a membrane F(0) domain - the membrane proton channel (subunits c, a, 8, e, f, g, k and j). These two domains are linked by a central stalk (subunits gamma, delta, and epsilon) rotating inside the F1 region and a stationary peripheral stalk (subunits F6, b, d, and OSCP). Interacts with PRICKLE3.

It is found in the mitochondrion membrane. Functionally, subunit 8, of the mitochondrial membrane ATP synthase complex (F(1)F(0) ATP synthase or Complex V) that produces ATP from ADP in the presence of a proton gradient across the membrane which is generated by electron transport complexes of the respiratory chain. ATP synthase complex consist of a soluble F(1) head domain - the catalytic core - and a membrane F(1) domain - the membrane proton channel. These two domains are linked by a central stalk rotating inside the F(1) region and a stationary peripheral stalk. During catalysis, ATP synthesis in the catalytic domain of F(1) is coupled via a rotary mechanism of the central stalk subunits to proton translocation. In vivo, can only synthesize ATP although its ATP hydrolase activity can be activated artificially in vitro. Part of the complex F(0) domain. The sequence is that of ATP synthase F(0) complex subunit 8 from Bos taurus (Bovine).